Here is a 213-residue protein sequence, read N- to C-terminus: ATP-dependent Clp protease proteolytic subunit (213 aa).

Ser114 functions as the Nucleophile in the catalytic mechanism. His139 is a catalytic residue.

The protein belongs to the peptidase S14 family. Fourteen ClpP subunits assemble into 2 heptameric rings which stack back to back to give a disk-like structure with a central cavity, resembling the structure of eukaryotic proteasomes.

The protein localises to the cytoplasm. It carries out the reaction Hydrolysis of proteins to small peptides in the presence of ATP and magnesium. alpha-casein is the usual test substrate. In the absence of ATP, only oligopeptides shorter than five residues are hydrolyzed (such as succinyl-Leu-Tyr-|-NHMec, and Leu-Tyr-Leu-|-Tyr-Trp, in which cleavage of the -Tyr-|-Leu- and -Tyr-|-Trp bonds also occurs).. Its function is as follows. Cleaves peptides in various proteins in a process that requires ATP hydrolysis. Has a chymotrypsin-like activity. Plays a major role in the degradation of misfolded proteins. The sequence is that of ATP-dependent Clp protease proteolytic subunit from Methylobacillus flagellatus (strain ATCC 51484 / DSM 6875 / VKM B-1610 / KT).